The primary structure comprises 284 residues: Protein phosphatase 1 regulatory subunit 3B (284 aa).

The short motif at 61 to 64 (RVSF) is the PP1-binding motif element. A CBM21 domain is found at 124-232 (RNRLQTNHVC…SNKGKNYRIT (109 aa)). Ser260 carries the post-translational modification Phosphoserine.

As to quaternary structure, interacts with glycogen, PPP1CC catalytic subunit of PP1 and PYGL. Associates with glycogen particles. Forms complexes with debranching enzyme, glycogen phosphorylase, glycogen synthase and phosphorylase kinase which is necessary for its regulation of PP1 activity. In terms of tissue distribution, highly expressed in liver. Moderately expressed in kidney, heart, testis, spleen and lung. Weakly expressed in skeletal muscle (at protein level). Expressed predominantly in liver. Expressed moderately in heart. Expressed weakly in lung, kidney, spleen and skeletal muscle.

In terms of biological role, acts as a glycogen-targeting subunit for phosphatase PP1. Facilitates interaction of the PP1 with enzymes of the glycogen metabolism and regulates its activity. Suppresses the rate at which PP1 dephosphorylates (inactivates) glycogen phosphorylase and enhances the rate at which it activates glycogen synthase and therefore limits glycogen breakdown. Its activity is inhibited by PYGL, resulting in inhibition of the glycogen synthase and glycogen phosphorylase phosphatase activities of PP1. Dramatically increases basal and insulin-stimulated glycogen synthesis upon overexpression in hepatocytes. This chain is Protein phosphatase 1 regulatory subunit 3B (Ppp1r3b), found in Rattus norvegicus (Rat).